A 135-amino-acid chain; its full sequence is Glutaredoxin-C4 (135 aa).

The 101-residue stretch at 32–132 folds into the Glutaredoxin domain; it reads ADFVKKTISS…KLLGVSGNKE (101 aa). A disulfide bridge connects residues Cys52 and Cys55.

It belongs to the glutaredoxin family. CPYC subfamily.

It localises to the cytoplasm. Has a glutathione-disulfide oxidoreductase activity in the presence of NADPH and glutathione reductase. Reduces low molecular weight disulfides and proteins. This is Glutaredoxin-C4 (GRXC4) from Arabidopsis thaliana (Mouse-ear cress).